A 383-amino-acid polypeptide reads, in one-letter code: Anhydro-N-acetylmuramic acid kinase (383 aa).

9–16 (GTSVDSID) lines the ATP pocket.

This sequence belongs to the anhydro-N-acetylmuramic acid kinase family.

The catalysed reaction is 1,6-anhydro-N-acetyl-beta-muramate + ATP + H2O = N-acetyl-D-muramate 6-phosphate + ADP + H(+). The protein operates within amino-sugar metabolism; 1,6-anhydro-N-acetylmuramate degradation. It functions in the pathway cell wall biogenesis; peptidoglycan recycling. Its function is as follows. Catalyzes the specific phosphorylation of 1,6-anhydro-N-acetylmuramic acid (anhMurNAc) with the simultaneous cleavage of the 1,6-anhydro ring, generating MurNAc-6-P. Is required for the utilization of anhMurNAc either imported from the medium or derived from its own cell wall murein, and thus plays a role in cell wall recycling. This Crocosphaera subtropica (strain ATCC 51142 / BH68) (Cyanothece sp. (strain ATCC 51142)) protein is Anhydro-N-acetylmuramic acid kinase.